Reading from the N-terminus, the 436-residue chain is Trigger factor (436 aa).

The PPIase FKBP-type domain occupies 161–248; the sequence is TDRVTIDLYG…LKKVEQYRLP (88 aa).

This sequence belongs to the FKBP-type PPIase family. Tig subfamily.

Its subcellular location is the cytoplasm. It carries out the reaction [protein]-peptidylproline (omega=180) = [protein]-peptidylproline (omega=0). Its function is as follows. Involved in protein export. Acts as a chaperone by maintaining the newly synthesized protein in an open conformation. Functions as a peptidyl-prolyl cis-trans isomerase. The protein is Trigger factor of Baumannia cicadellinicola subsp. Homalodisca coagulata.